A 237-amino-acid chain; its full sequence is Carbohydrate deacetylase (237 aa).

Histidine 59 and histidine 125 together coordinate Mg(2+).

The protein belongs to the YdjC deacetylase family. Mg(2+) serves as cofactor.

In terms of biological role, probably catalyzes the deacetylation of acetylated carbohydrates an important step in the degradation of oligosaccharides. The chain is Carbohydrate deacetylase from Halalkalibacterium halodurans (strain ATCC BAA-125 / DSM 18197 / FERM 7344 / JCM 9153 / C-125) (Bacillus halodurans).